Here is a 256-residue protein sequence, read N- to C-terminus: (E)-benzylidenesuccinyl-CoA hydratase (256 aa).

Glu-110 acts as the Nucleophile in catalysis. Glu-130 acts as the Proton acceptor in catalysis.

This sequence belongs to the enoyl-CoA hydratase/isomerase family. As to quaternary structure, homotrimer.

The enzyme catalyses (2S)-[(R)-hydroxy(phenyl)methyl]succinyl-CoA = (E)-2-benzylidenesuccinyl-CoA + H2O. It functions in the pathway xenobiotic degradation; toluene degradation. Functionally, involved in an anaerobic toluene degradation pathway. Catalyzes the hydration of (E)-2-benzylidenesuccinyl-CoA to the corresponding alcohol intermediate, 2-(alpha-hydroxybenzyl)succinyl-CoA. Also accepts the N-acetylcysteamine (NAC) thioester of (E)-benzylidenesuccinate. This is (E)-benzylidenesuccinyl-CoA hydratase from Thauera aromatica.